We begin with the raw amino-acid sequence, 159 residues long: Protein B1 (159 aa).

The segment covering 1-15 (MQKNMKTKKTKKRGR) has biased composition (basic residues). Disordered regions lie at residues 1–100 (MQKN…RTRE) and 133–159 (PGHG…DPPR). Residues 16–31 (KEGNTPETERRMEPAR) show a composition bias toward basic and acidic residues. Residues 85–96 (RGRHIHTRGART) are compositionally biased toward basic residues.

The polypeptide is Protein B1 (B1) (Human herpesvirus 6B (strain Z29) (HHV-6 variant B)).